The sequence spans 670 residues: Microtubule-associated protein ssm4 (670 aa).

A CAP-Gly domain is found at 23 to 65; the sequence is GSTDFESGIWLGVELLNGKGKNDGSVKGKRYFSCEKGKGIFVR. Coiled-coil stretches lie at residues 209 to 254 and 404 to 582; these read KSEL…KNSI and VKTR…KLAD. A Phosphoserine modification is found at Ser-460. Phosphothreonine is present on Thr-606.

It localises to the cytoplasm. The protein localises to the cytoskeleton. Its subcellular location is the spindle. Binds to nuclear microtubules with the effect of either modifying their structure or function. This then promotes meiotic nuclear division. This is Microtubule-associated protein ssm4 (ssm4) from Schizosaccharomyces pombe (strain 972 / ATCC 24843) (Fission yeast).